Consider the following 509-residue polypeptide: Phosphoglycerate kinase, glycosomal (509 aa).

(2R)-3-phosphoglycerate-binding residues include Val-32, Asp-33, Phe-34, Asn-35, Arg-48, Ser-70, His-71, Gly-73, Arg-74, Arg-224, His-260, and Arg-261. Gly-306 is a binding site for ADP. Gly-306 contributes to the CDP binding site. Lys-308 lines the (2R)-3-phosphoglycerate pocket. Lys-308 is an AMP binding site. A CDP-binding site is contributed by Asp-311. Asp-311 is a Mg(2+) binding site. ADP contacts are provided by Lys-312 and Gly-330. Lys-312 provides a ligand contact to AMP. ATP is bound at residue Lys-312. A CDP-binding site is contributed by Gly-330. AMP-binding residues include Ala-331 and Ala-403. 2 residues coordinate ATP: Ala-331 and Ala-403. Residues Ala-403 and Asn-427 each coordinate ADP. 2 residues coordinate CDP: Gly-428 and Phe-433. Phe-433, Glu-434, Asp-466, and Ser-467 together coordinate ADP. Glu-434 serves as a coordination point for AMP. Glu-434, Asp-466, and Ser-467 together coordinate ATP. Asp-466 contributes to the Mg(2+) binding site.

Belongs to the phosphoglycerate kinase family. In terms of assembly, monomer. Mg(2+) is required as a cofactor.

The protein resides in the glycosome. It carries out the reaction (2R)-3-phosphoglycerate + ATP = (2R)-3-phospho-glyceroyl phosphate + ADP. The protein operates within carbohydrate degradation; glycolysis; pyruvate from D-glyceraldehyde 3-phosphate: step 2/5. The polypeptide is Phosphoglycerate kinase, glycosomal (56PGK) (Trypanosoma congolense).